A 172-amino-acid polypeptide reads, in one-letter code: Sec-independent protein translocase protein TatB (172 aa).

The chain crosses the membrane as a helical span at residues 1-21 (MFDIGWSELLVIGVVALIAIG).

Belongs to the TatB family. As to quaternary structure, the Tat system comprises two distinct complexes: a TatABC complex, containing multiple copies of TatA, TatB and TatC subunits, and a separate TatA complex, containing only TatA subunits. Substrates initially bind to the TatABC complex, which probably triggers association of the separate TatA complex to form the active translocon.

The protein localises to the cell inner membrane. In terms of biological role, part of the twin-arginine translocation (Tat) system that transports large folded proteins containing a characteristic twin-arginine motif in their signal peptide across membranes. Together with TatC, TatB is part of a receptor directly interacting with Tat signal peptides. TatB may form an oligomeric binding site that transiently accommodates folded Tat precursor proteins before their translocation. This Rhodopseudomonas palustris (strain BisB18) protein is Sec-independent protein translocase protein TatB.